Here is a 427-residue protein sequence, read N- to C-terminus: UBX domain-containing protein 2 (427 aa).

2 disordered regions span residues 115–143 (FDQSPSQIPFPSSNTEDSSEESDSSSRAS) and 273–331 (ETSG…GVAD). Low complexity predominate over residues 311 to 326 (STTESQGESSSQQAES). Positions 349–425 (PGPNVTRIQI…GIQNTALQFE (77 aa)) constitute a UBX domain. At serine 371 the chain carries Phosphoserine.

Interacts with cdc48.

Involved in CDC48-dependent protein degradation through the ubiquitin/proteasome pathway. The chain is UBX domain-containing protein 2 (ubx2) from Schizosaccharomyces pombe (strain 972 / ATCC 24843) (Fission yeast).